The primary structure comprises 329 residues: Centromere protein L (329 aa).

A phosphoserine mark is found at S40 and S54.

Belongs to the CENP-L/IML3 family. As to quaternary structure, component of the CENPA-CAD complex, composed of CENPI, CENPK, CENPL, CENPO, CENPP, CENPQ, CENPR and CENPS. The CENPA-CAD complex interacts with the CENPA-NAC complex, at least composed of CENPA, CENPC, CENPH, CENPM, CENPN, CENPT and CENPU.

The protein localises to the nucleus. It localises to the chromosome. Its subcellular location is the centromere. In terms of biological role, component of the CENPA-CAD (nucleosome distal) complex, a complex recruited to centromeres which is involved in assembly of kinetochore proteins, mitotic progression and chromosome segregation. May be involved in incorporation of newly synthesized CENPA into centromeres via its interaction with the CENPA-NAC complex. The polypeptide is Centromere protein L (Cenpl) (Mus musculus (Mouse)).